Consider the following 188-residue polypeptide: UPF0461 protein C5orf24 homolog (188 aa).

Phosphoserine is present on Ser37. Residue Lys75 forms a Glycyl lysine isopeptide (Lys-Gly) (interchain with G-Cter in SUMO2) linkage. Residues Lys80 to Arg92 show a composition bias toward basic residues. The interval Lys80–Pro141 is disordered. Positions Ser94–Gly107 are enriched in polar residues. Phosphoserine is present on residues Ser121 and Ser180. A Glycyl lysine isopeptide (Lys-Gly) (interchain with G-Cter in SUMO2) cross-link involves residue Lys184.

It belongs to the UPF0461 family.

The protein is UPF0461 protein C5orf24 homolog of Mus musculus (Mouse).